The primary structure comprises 263 residues: Tryptophan 2,3-dioxygenase (263 aa).

Substrate contacts are provided by residues phenylalanine 32–histidine 36, tyrosine 94, and arginine 98. Histidine 221 provides a ligand contact to heme. Threonine 235 is a binding site for substrate.

This sequence belongs to the tryptophan 2,3-dioxygenase family. As to quaternary structure, homotetramer. It depends on heme as a cofactor.

The catalysed reaction is L-tryptophan + O2 = N-formyl-L-kynurenine. It functions in the pathway amino-acid degradation; L-tryptophan degradation via kynurenine pathway; L-kynurenine from L-tryptophan: step 1/2. Heme-dependent dioxygenase that catalyzes the oxidative cleavage of the L-tryptophan (L-Trp) pyrrole ring and converts L-tryptophan to N-formyl-L-kynurenine. Catalyzes the oxidative cleavage of the indole moiety. In Erythrobacter litoralis (strain HTCC2594), this protein is Tryptophan 2,3-dioxygenase.